Consider the following 308-residue polypeptide: Protein translocase subunit SecF (308 aa).

The next 6 membrane-spanning stretches (helical) occupy residues 12 to 32 (YFIF…TKGF), 127 to 147 (AKNA…YITI), 152 to 172 (IYAL…IGFI), 182 to 202 (PFIA…IVIF), 234 to 254 (VYTS…GGST), and 262 to 282 (LLVG…PLVY).

The protein belongs to the SecD/SecF family. SecF subfamily. In terms of assembly, forms a complex with SecD. Part of the essential Sec protein translocation apparatus which comprises SecA, SecYEG and auxiliary proteins SecDF. Other proteins may also be involved.

Its subcellular location is the cell inner membrane. Part of the Sec protein translocase complex. Interacts with the SecYEG preprotein conducting channel. SecDF uses the proton motive force (PMF) to complete protein translocation after the ATP-dependent function of SecA. In Sebaldella termitidis (strain ATCC 33386 / NCTC 11300), this protein is Protein translocase subunit SecF.